A 256-amino-acid polypeptide reads, in one-letter code: uncharacterized protein (256 aa).

Residues 213 to 243 are a coiled coil; that stretch reads TMSMEAKLEAAKKTLEKFKQEAASKRAKRTK. A disordered region spans residues 231–256; that stretch reads KQEAASKRAKRTKPSGSKTTRSTGRK. Residues 244-256 are compositionally biased toward polar residues; it reads PSGSKTTRSTGRK.

This is an uncharacterized protein from Acanthamoeba polyphaga (Amoeba).